A 142-amino-acid polypeptide reads, in one-letter code: Small heat shock protein IbpB (142 aa).

A sHSP domain is found at 26–137; that stretch reads TAEHQAFPPY…APQRIAISDR (112 aa).

It belongs to the small heat shock protein (HSP20) family. As to quaternary structure, homodimer. Forms homomultimers of about 100-150 subunits at optimal growth temperatures. Conformation changes to oligomers at high temperatures or high ionic concentrations. The decrease in size of the multimers is accompanied by an increase in chaperone activity.

The protein localises to the cytoplasm. In terms of biological role, associates with aggregated proteins, together with IbpA, to stabilize and protect them from irreversible denaturation and extensive proteolysis during heat shock and oxidative stress. Aggregated proteins bound to the IbpAB complex are more efficiently refolded and reactivated by the ATP-dependent chaperone systems ClpB and DnaK/DnaJ/GrpE. Its activity is ATP-independent. This chain is Small heat shock protein IbpB, found in Enterobacter sp. (strain 638).